Reading from the N-terminus, the 151-residue chain is Phosphopantetheine adenylyltransferase (151 aa).

Serine 9 serves as a coordination point for substrate. ATP-binding positions include 9-10 (SF) and histidine 17. Residues lysine 41, threonine 73, and arginine 87 each coordinate substrate. ATP-binding positions include 88–90 (GLR), glutamate 98, and 122–128 (KAHISST).

The protein belongs to the bacterial CoaD family. Homohexamer. Mg(2+) serves as cofactor.

It is found in the cytoplasm. It catalyses the reaction (R)-4'-phosphopantetheine + ATP + H(+) = 3'-dephospho-CoA + diphosphate. It functions in the pathway cofactor biosynthesis; coenzyme A biosynthesis; CoA from (R)-pantothenate: step 4/5. Functionally, reversibly transfers an adenylyl group from ATP to 4'-phosphopantetheine, yielding dephospho-CoA (dPCoA) and pyrophosphate. The polypeptide is Phosphopantetheine adenylyltransferase (Christiangramia forsetii (strain DSM 17595 / CGMCC 1.15422 / KT0803) (Gramella forsetii)).